Consider the following 1272-residue polypeptide: Myosin-binding protein C, cardiac-type (1272 aa).

Residues 95–147 (KEPEKSEPVAPAEASPAPAASELPAPPVESNQNPEVPPAETQPEEPVDPIGLF) form a disordered region. Low complexity predominate over residues 102–117 (PVAPAEASPAPAASEL). The Ig-like C2-type 1 domain occupies 137–252 (PEEPVDPIGL…NLIVNEAPVS (116 aa)). At serine 265 the chain carries Phosphoserine; by PKA and PKC. Residue threonine 274 is modified to Phosphothreonine; by PKA and PKC. Serine 300 bears the Phosphoserine; by PKA mark. Ig-like C2-type domains follow at residues 359 to 451 (KKST…VKEP), 452 to 542 (PILI…VQEK), 543 to 640 (KLEV…FVPR), and 644 to 763 (PKIH…ADIT). Fibronectin type-III domains follow at residues 772–868 (PPEA…IAPP) and 870–965 (EPTH…VQEI). The 89-residue stretch at 969–1057 (PKICVPRHLR…ENMTDTVAIT (89 aa)) folds into the Ig-like C2-type 6 domain. The Fibronectin type-III 3 domain occupies 1066–1161 (PPQNIKLADV…TKNPAYIQKT (96 aa)). Position 1169 is a phosphoserine; by PKC (serine 1169). The region spanning 1179-1263 (PKFTHPLVNR…VNERGEAEIE (85 aa)) is the Ig-like C2-type 7 domain.

The protein belongs to the immunoglobulin superfamily. MyBP family. In terms of processing, substrate for phosphorylation by PKA and PKC. Reversible phosphorylation appears to modulate contraction. As to expression, expressed specifically in cardiac muscle among adult tissues, but is also expressed transiently in the skeletal muscle at early developmental stages. Isoform Type I is found in embryonic skeletal muscle and isoform Type II is found in both embryonic skeletal and cardiac muscle.

Its function is as follows. Thick filament-associated protein located in the crossbridge region of vertebrate striated muscle A bands. In vitro it binds MHC, F-actin and native thin filaments, and modifies the activity of actin-activated myosin ATPase. It may modulate muscle contraction or may play a more structural role. May be involved in the early phase of myofibrillogenesis. The protein is Myosin-binding protein C, cardiac-type (MYBPC3) of Gallus gallus (Chicken).